A 105-amino-acid polypeptide reads, in one-letter code: Large ribosomal subunit protein uL24 (105 aa).

Belongs to the universal ribosomal protein uL24 family. As to quaternary structure, part of the 50S ribosomal subunit.

One of two assembly initiator proteins, it binds directly to the 5'-end of the 23S rRNA, where it nucleates assembly of the 50S subunit. Its function is as follows. One of the proteins that surrounds the polypeptide exit tunnel on the outside of the subunit. This Cellvibrio japonicus (strain Ueda107) (Pseudomonas fluorescens subsp. cellulosa) protein is Large ribosomal subunit protein uL24.